A 490-amino-acid polypeptide reads, in one-letter code: Hippocampus abundant transcript 1 protein (490 aa).

The residue at position 1 (Met-1) is an N-acetylmethionine. Topologically, residues 1-40 (MTQGKKKKRAANRSIMLAKKIIIKDGGTPQGIGSPSVYHA) are extracellular. Asn-12 carries N-linked (GlcNAc...) asparagine glycosylation. The helical transmembrane segment at 41 to 61 (VIVIFLEFFAWGLLTAPTLVV) threads the bilayer. Topologically, residues 62-74 (LHETFPKHTFLMN) are cytoplasmic. The helical transmembrane segment at 75 to 95 (GLIQGVKGLLSFLSAPLIGAL) threads the bilayer. At 96–103 (SDVWGRKS) the chain is on the extracellular side. Residues 104 to 124 (FLLLTVFFTCAPIPLMKISPW) traverse the membrane as a helical segment. At 125–126 (WY) the chain is on the cytoplasmic side. A helical transmembrane segment spans residues 127 to 147 (FAVISVSGVFAVTFSVVFAYV). Residues 148–160 (ADITQEHERSMAY) lie on the Extracellular side of the membrane. A helical membrane pass occupies residues 161-181 (GLVSATFAASLVTSPAIGAYL). The Cytoplasmic segment spans residues 182 to 188 (GRVYGDS). The helical transmembrane segment at 189–209 (LVVVLATAIALLDICFILVAV) threads the bilayer. Over 210 to 243 (PESLPEKMRPASWGAPISWEQADPFASLKKVGQD) the chain is Extracellular. The chain crosses the membrane as a helical span at residues 244-264 (SIVLLICITVFLSYLPEAGQY). The Cytoplasmic portion of the chain corresponds to 265–284 (SSFFLYLRQIMKFSPESVAA). Residues 285-305 (FIAVLGILSIIAQTIVLSLLM) form a helical membrane-spanning segment. Over 306–313 (RSIGNKNT) the chain is Extracellular. Residues 314–334 (ILLGLGFQILQLAWYGFGSEP) traverse the membrane as a helical segment. Over 335–337 (WMM) the chain is Cytoplasmic. A helical membrane pass occupies residues 338–358 (WAAGAVAAMSSITFPAVSALV). The Extracellular segment spans residues 359-379 (SRTADADQQGVVQGMITGIRG). The chain crosses the membrane as a helical span at residues 380 to 400 (LCNGLGPALYGFIFYIFHVEL). Residues 401–427 (KELPITGTDLGTNTSPQHHFEQNSIIP) are Cytoplasmic-facing. Residues 428–448 (GPPFLFGACSVLLALLVALFI) traverse the membrane as a helical segment. The Extracellular portion of the chain corresponds to 449–490 (PEHTNLSLRSSSWRKHCGSHSHPHSTQAPGEAKEPLLQDTNV). An N-linked (GlcNAc...) asparagine glycan is attached at Asn-453. Residues 466 to 490 (GSHSHPHSTQAPGEAKEPLLQDTNV) are disordered.

Belongs to the major facilitator superfamily. Expressed in various tissues.

Its subcellular location is the membrane. This is Hippocampus abundant transcript 1 protein from Mus musculus (Mouse).